The sequence spans 323 residues: Serine/threonine-protein phosphatase PP1-gamma catalytic subunit (323 aa).

At Ala2 the chain carries N-acetylalanine. Mn(2+) is bound by residues Asp64, His66, Asp92, and Asn124. Residue His125 is the Proton donor of the active site. The Mn(2+) site is built by His173 and His248. A disordered region spans residues 302-323 (KKPNATRPVTPPRGMITKQAKK). Residues Thr307 and Thr311 each carry the phosphothreonine modification.

The protein belongs to the PPP phosphatase family. PP-1 subfamily. As to quaternary structure, PP1 comprises a catalytic subunit, PPP1CA, PPP1CB or PPP1CC, which is folded into its native form by inhibitor 2 and glycogen synthetase kinase 3, and then complexed to one or several targeting or regulatory subunits. PPP1R12A, PPP1R12B and PPP1R12C mediate binding to myosin. PPP1R3A (in skeletal muscle), PPP1R3B (in sliver), PPP1R3C, PPP1R3D and PPP1R3F (in brain) mediate binding to glycogen. PPP1R15A and PPP1R15B mediate binding to EIF2S1. Part of a complex containing PPP1R15B, PP1 and NCK1/2. Interacts with PPP1R3B, PPP1R7 and CDCA2. Isoform 2 interacts with SPZ1. Interacts with IKFZ1; the interaction targets PPP1CC to pericentromeric heterochromatin, dephosphorylates IKAROS, stabilizes it and prevents it from degradation. Interacts with NOM1 and PPP1R8. Component of the PTW/PP1 phosphatase complex, composed of PPP1R10/PNUTS, TOX4, WDR82, and PPP1CA or PPP1CB or PPP1CC. Interacts with PPP1R8. Interacts with NEK2. Interacts with URI1; the interaction is phosphorylation-dependent and occurs in a growth factor-dependent manner. Interacts with FOXP3. Interacts with TMEM225 (via RVxF motif). Interacts with MKI67. Interacts with RRP1B; this targets PPP1CC to the nucleolus. Found in a complex with PPP1CA, PPP1CC, SHC1 and PEAK1. Interacts with DYNLT4. Interacts (via RVxF motif) with FIRRM; regulates PLK1 kinase activity. Interacts with the KNL1 complex subunit KNL1; the interaction is direct and mutually exclusive with KNL1 binding to microtubules. Component of the SHOC2-MRAS-PP1c (SMP) complex consisting of SHOC2, GTP-bound M-Ras/MRAS and the catalytic subunit of protein phosphatase 1 (either PPP1CA, PPP1CB or PPP1CC). SHOC2 and PP1c preferably bind M-Ras/MRAS, but they also bind K-Ras/KRAS, N-Ras/NRAS and H-Ras/HRAS; these interactions are GTP-dependent and both SHOC2 and PP1c are required to form a stable complex. Interacts with SHOC2 in the absence of Ras GTPases. Mn(2+) is required as a cofactor. Post-translationally, phosphorylated by NEK2. As to expression, isoform 2 is expressed only in testis, in the late spermatocytes and early spematids (at protein level).

It localises to the cytoplasm. The protein localises to the nucleus. It is found in the cleavage furrow. Its subcellular location is the nucleolus. The protein resides in the nucleoplasm. It localises to the chromosome. The protein localises to the centromere. It is found in the kinetochore. Its subcellular location is the nucleus speckle. The protein resides in the midbody. It localises to the mitochondrion. The protein localises to the cytoskeleton. It is found in the microtubule organizing center. It carries out the reaction O-phospho-L-seryl-[protein] + H2O = L-seryl-[protein] + phosphate. The catalysed reaction is O-phospho-L-threonyl-[protein] + H2O = L-threonyl-[protein] + phosphate. With respect to regulation, inactivated by binding to URI1. Functionally, protein phosphatase that associates with over 200 regulatory proteins to form highly specific holoenzymes which dephosphorylate hundreds of biological targets. Protein phosphatase 1 (PP1) is essential for cell division, and participates in the regulation of glycogen metabolism, muscle contractility and protein synthesis. Dephosphorylates RPS6KB1. Involved in regulation of ionic conductances and long-term synaptic plasticity. May play an important role in dephosphorylating substrates such as the postsynaptic density-associated Ca(2+)/calmodulin dependent protein kinase II. Component of the PTW/PP1 phosphatase complex, which plays a role in the control of chromatin structure and cell cycle progression during the transition from mitosis into interphase. In balance with CSNK1D and CSNK1E, determines the circadian period length, through the regulation of the speed and rhythmicity of PER1 and PER2 phosphorylation. May dephosphorylate CSNK1D and CSNK1E. Regulates the recruitment of the SKA complex to kinetochores. Core component of the SHOC2-MRAS-PP1c (SMP) holophosphatase complex that regulates the MAPK pathway activation. Dephosphorylates MKI67 at the onset of anaphase. The SMP complex specifically dephosphorylates the inhibitory phosphorylation at 'Ser-259' of RAF1 kinase, 'Ser-365' of BRAF kinase and 'Ser-214' of ARAF kinase, stimulating their kinase activities. The SMP complex enhances the dephosphorylation activity and substrate specificity of PP1c. In terms of biological role, required for normal male fertility. This Rattus norvegicus (Rat) protein is Serine/threonine-protein phosphatase PP1-gamma catalytic subunit (Ppp1cc).